Here is a 450-residue protein sequence, read N- to C-terminus: Phosphoglucosamine mutase (450 aa).

The active-site Phosphoserine intermediate is S102. S102, D242, D244, and D246 together coordinate Mg(2+). A Phosphoserine modification is found at S102.

It belongs to the phosphohexose mutase family. Mg(2+) is required as a cofactor. Activated by phosphorylation.

The enzyme catalyses alpha-D-glucosamine 1-phosphate = D-glucosamine 6-phosphate. Its function is as follows. Catalyzes the conversion of glucosamine-6-phosphate to glucosamine-1-phosphate. This Staphylococcus haemolyticus (strain JCSC1435) protein is Phosphoglucosamine mutase.